The following is a 130-amino-acid chain: MPMAPRVLLFCLLGLAVTEGHGLEAAVPIPGCHLHPFNVTVRSDRHGTCQGSHVAQACVGHCESSAFPSRYSVLVASGYRHNITSVSQCCTISSLKKVRVWLHCVGNQRGELEIFTARACQCDMCRLSRY.

An N-terminal signal peptide occupies residues 1 to 22; that stretch reads MPMAPRVLLFCLLGLAVTEGHG. 4 disulfides stabilise this stretch: cysteine 32/cysteine 90, cysteine 49/cysteine 104, cysteine 58/cysteine 120, and cysteine 62/cysteine 122. Asparagine 38 and asparagine 82 each carry an N-linked (GlcNAc...) asparagine glycan.

The protein belongs to the glycoprotein hormones subunit alpha family. As to quaternary structure, heterodimer with GPHB5; this heterodimer interacts with thyroid-stimulating hormone receptor (TSHR), and hence stimulates cAMP production.

Its subcellular location is the secreted. Functions as a heterodimeric glycoprotein hormone with GPHB5 able to bind and activate the thyroid-stimulating hormone receptor (TSHR), leading to increased cAMP production. Plays a central role in controlling thyroid cell metabolism. The polypeptide is Glycoprotein hormone alpha-2 (Gpha2) (Rattus norvegicus (Rat)).